A 299-amino-acid polypeptide reads, in one-letter code: Probable 4-deoxy-4-formamido-L-arabinose-phosphoundecaprenol deformylase ArnD (299 aa).

Positions Ile2–Val263 constitute a NodB homology domain.

This sequence belongs to the polysaccharide deacetylase family. ArnD deformylase subfamily.

The enzyme catalyses 4-deoxy-4-formamido-alpha-L-arabinopyranosyl di-trans,octa-cis-undecaprenyl phosphate + H2O = 4-amino-4-deoxy-alpha-L-arabinopyranosyl di-trans,octa-cis-undecaprenyl phosphate + formate. Its pathway is glycolipid biosynthesis; 4-amino-4-deoxy-alpha-L-arabinose undecaprenyl phosphate biosynthesis; 4-amino-4-deoxy-alpha-L-arabinose undecaprenyl phosphate from UDP-4-deoxy-4-formamido-beta-L-arabinose and undecaprenyl phosphate: step 2/2. It functions in the pathway bacterial outer membrane biogenesis; lipopolysaccharide biosynthesis. Its function is as follows. Catalyzes the deformylation of 4-deoxy-4-formamido-L-arabinose-phosphoundecaprenol to 4-amino-4-deoxy-L-arabinose-phosphoundecaprenol. The modified arabinose is attached to lipid A and is required for resistance to polymyxin and cationic antimicrobial peptides. The protein is Probable 4-deoxy-4-formamido-L-arabinose-phosphoundecaprenol deformylase ArnD of Aeromonas salmonicida (strain A449).